Here is a 362-residue protein sequence, read N- to C-terminus: Protein-glutamate methylesterase/protein-glutamine glutaminase 5 (362 aa).

One can recognise a Response regulatory domain in the interval 13 to 130 (RVLVVDDSAL…RRFLEESRVR (118 aa)). Asp-64 is subject to 4-aspartylphosphate. The region spanning 172 to 362 (LQTTERVVVV…IPPELLRLCR (191 aa)) is the CheB-type methylesterase domain. Active-site residues include Ser-184, His-210, and Asp-306.

This sequence belongs to the CheB family. Post-translationally, phosphorylated by CheA. Phosphorylation of the N-terminal regulatory domain activates the methylesterase activity.

It is found in the cytoplasm. The enzyme catalyses [protein]-L-glutamate 5-O-methyl ester + H2O = L-glutamyl-[protein] + methanol + H(+). It catalyses the reaction L-glutaminyl-[protein] + H2O = L-glutamyl-[protein] + NH4(+). Involved in chemotaxis. Part of a chemotaxis signal transduction system that modulates chemotaxis in response to various stimuli. Catalyzes the demethylation of specific methylglutamate residues introduced into the chemoreceptors (methyl-accepting chemotaxis proteins or MCP) by CheR. Also mediates the irreversible deamidation of specific glutamine residues to glutamic acid. The chain is Protein-glutamate methylesterase/protein-glutamine glutaminase 5 from Anaeromyxobacter dehalogenans (strain 2CP-C).